Consider the following 672-residue polypeptide: Forkhead box protein O3 (672 aa).

Disordered stretches follow at residues 1–85 and 110–152; these read MAEA…GVSS and GPAS…CSSR. A Phosphoserine modification is found at Ser-30. Position 32 is a phosphothreonine (Thr-32). An N6-methyllysine modification is found at Lys-46. A compositionally biased stretch (acidic residues) spans 57–68; that stretch reads IPEEDDDEDDED. Residues 80–108 are required for mitochondrial import; sequence GGGVSSTLGSGLLLEDSAMLLAPGGQDLG. Residues 110 to 129 show a composition bias toward low complexity; it reads GPASAAGALSGGTPTQLQPQ. Lys-148 is subject to N6-methyllysine. A DNA-binding region (fork-head) is located at residues 156–250; the sequence is WGNLSYADLI…KSGKAPRRRA (95 aa). Position 178 is a phosphothreonine (Thr-178). A phosphoserine mark is found at Ser-208 and Ser-214. At Lys-229 the chain carries N6-methyllysine. Residues 230-301 form a disordered region; it reads SSWWIINPDG…GSPTSRSSDE (72 aa). Position 241 is an N6-acetyllysine (Lys-241). The Nuclear localization signal motif lies at 241–258; that stretch reads KSGKAPRRRAVSMDNSNK. At Ser-252 the chain carries Phosphoserine. Residues 260 to 271 are compositionally biased toward basic residues; the sequence is TKSRGRAAKKKA. 2 positions are modified to N6-methyllysine: Lys-261 and Lys-270. Residues Ser-279 and Ser-283 each carry the phosphoserine modification. The span at 282–297 shows a compositional bias: polar residues; the sequence is DSPSQLSKWPGSPTSR. Lys-289 carries the post-translational modification N6-methyllysine. Phosphoserine is present on Ser-293. A Phosphoserine; by CaMK2A modification is found at Ser-298. The segment at 299 to 672 is mediates interaction with CHUK/IKKA and IKBKB/IKKB; it reads SDELDAWTDF…QASSQSWVPG (374 aa). A Phosphoserine modification is found at Ser-310. Ser-314 carries the post-translational modification Phosphoserine; by SGK1. Phosphoserine; by AMPK is present on residues Ser-398 and Ser-412. Disordered stretches follow at residues 399-441 and 535-583; these read QPSP…SLNS and HQHQ…QTLS. Composition is skewed to polar residues over residues 409-441 and 548-577; these read RGSS…SLNS and ALSN…PASQ. At Lys-418 the chain carries N6-methyllysine. Position 420 is a phosphoserine (Ser-420). Position 550 is a phosphoserine; by MAPKAPK5 (Ser-550). The residue at position 554 (Ser-554) is a Phosphoserine; by AMPK and MAPKAPK5. Ser-587 and Ser-625 each carry phosphoserine; by AMPK. Ser-643 is subject to Phosphoserine; by IKKB.

In terms of assembly, upon metabolic stress, forms a complex composed of FOXO3, SIRT3 and mitochondrial RNA polymerase POLRMT; the complex is recruited to mtDNA in a SIRT3-dependent manner. Also forms a complex composed of FOXO3, SIRT3, TFAM and POLRMT. Interacts with SIRT2; the interaction occurs independently of SIRT2 deacetylase activity. Interacts with YWHAB/14-3-3-beta and YWHAZ/14-3-3-zeta, which are required for cytosolic sequestration. Upon oxidative stress, interacts with STK4/MST1, which disrupts interaction with YWHAB/14-3-3-beta and leads to nuclear translocation. Interacts with PIM1. Interacts with DDIT3/CHOP. Interacts (deacetylated form) with SKP2. Interacts with CHUK and IKBKB. Interacts with CAMK2A, CAMK2B and calcineurin A. Interacts with NUPR1; this interaction represses FOXO3 transactivation. Post-translationally, deacetylation by SIRT1 or SIRT2 stimulates interaction of FOXO3 with SKP2 and facilitates SCF(SKP2)-mediated FOXO3 ubiquitination and proteasomal degradation. Deacetylation by SIRT2 stimulates FOXO3-mediated transcriptional activity in response to oxidative stress. Deacetylated by SIRT3. Deacetylation by SIRT3 stimulates FOXO3-mediated mtDNA transcriptional activity in response to metabolic stress. In the presence of survival factors such as IGF1, phosphorylated on Thr-32 and Ser-252 by AKT1/PKB. This phosphorylated form then interacts with 14-3-3 proteins and is retained in the cytoplasm. Survival factor withdrawal induces dephosphorylation and promotes translocation to the nucleus where the dephosphorylated protein induces transcription of target genes and triggers apoptosis. Although AKT1/PKB doesn't appear to phosphorylate Ser-314 directly, it may activate other kinases that trigger phosphorylation at this residue. Phosphorylated by STK4/MST1 on Ser-208 upon oxidative stress, which leads to dissociation from YWHAB/14-3-3-beta and nuclear translocation. Phosphorylated by PIM1. Phosphorylation by AMPK leads to the activation of transcriptional activity without affecting subcellular localization. Phosphorylated by AMPK on Ser-30 in response to metabolic stress which mediates FOXO3 mitochondrial translocation. Phosphorylation by MAPKAPK5 promotes nuclear localization and DNA-binding, leading to induction of miR-34b and miR-34c expression, 2 post-transcriptional regulators of MYC that bind to the 3'UTR of MYC transcript and prevent its translation. Phosphorylated by CHUK/IKKA and IKBKB/IKKB. TNF-induced inactivation of FOXO3 requires its phosphorylation at Ser-643 by IKBKB/IKKB which promotes FOXO3 retention in the cytoplasm, polyubiquitination and ubiquitin-mediated proteasomal degradation. May be dephosphorylated by calcineurin A on Ser-298 which abolishes FOXO3 transcriptional activity. Phosphorylation at Ser-252 promotes its degradation by the proteasome. Dephosphorylation at Ser-252 by protein phosphatase 2A (PPP2CA) promotes its stabilization; interaction with PPP2CA is enhanced by AMBRA1. In terms of processing, heavily methylated by SET9 which decreases stability, while moderately increasing transcriptional activity. The main methylation site is Lys-270. Methylation doesn't affect subcellular location. Post-translationally, polyubiquitinated. Ubiquitinated by a SCF complex containing SKP2, leading to proteasomal degradation. The N-terminus is cleaved following import into the mitochondrion. As to expression, expressed in white and brown adipose tissues (at protein level). Expressed in liver, kidney, lung and colon (at protein level). Expressed in skeletal muscles (at protein level).

Its subcellular location is the cytoplasm. The protein resides in the cytosol. The protein localises to the nucleus. It is found in the mitochondrion matrix. It localises to the mitochondrion outer membrane. Its function is as follows. Transcriptional activator that recognizes and binds to the DNA sequence 5'-[AG]TAAA[TC]A-3' and regulates different processes, such as apoptosis and autophagy. Acts as a positive regulator of autophagy in skeletal muscle: in starved cells, enters the nucleus following dephosphorylation and binds the promoters of autophagy genes, such as GABARAP1L, MAP1LC3B and ATG12, thereby activating their expression, resulting in proteolysis of skeletal muscle proteins. Triggers apoptosis in the absence of survival factors, including neuronal cell death upon oxidative stress. Participates in post-transcriptional regulation of MYC: following phosphorylation by MAPKAPK5, promotes induction of miR-34b and miR-34c expression, 2 post-transcriptional regulators of MYC that bind to the 3'UTR of MYC transcript and prevent its translation. In response to metabolic stress, translocates into the mitochondria where it promotes mtDNA transcription. Also acts as a key regulator of chondrogenic commitment of skeletal progenitor cells in response to lipid availability: when lipids levels are low, translocates to the nucleus and promotes expression of SOX9, which induces chondrogenic commitment and suppresses fatty acid oxidation. Also acts as a key regulator of regulatory T-cells (Treg) differentiation by activating expression of FOXP3. This Mus musculus (Mouse) protein is Forkhead box protein O3.